Consider the following 213-residue polypeptide: Serine protease inhibitor 5 (213 aa).

The N-terminal stretch at 1 to 22 (MKCLFLLCLCLVPIVVFSSTFT) is a signal peptide. The propeptide occupies 23–28 (SQNPIN). The short motif at 25 to 30 (NPINLP) is the Vacuolar targeting signal element. 2 disulfides stabilise this stretch: cysteine 76-cysteine 125 and cysteine 174-cysteine 183.

The protein belongs to the protease inhibitor I3 (leguminous Kunitz-type inhibitor) family.

It is found in the vacuole. Its function is as follows. Inhibitor of trypsin (serine protease). Protects the plant by inhibiting proteases of invading organisms. This chain is Serine protease inhibitor 5, found in Solanum tuberosum (Potato).